We begin with the raw amino-acid sequence, 649 residues long: Acetyl-coenzyme A synthetase (649 aa).

Residues 190-193 (RGGR) and Thr-310 contribute to the CoA site. Residues 386 to 388 (GEP), 410 to 415 (DTWWQT), Asp-499, and Arg-514 each bind ATP. Residue Ser-522 participates in CoA binding. ATP is bound at residue Arg-525. The Mg(2+) site is built by Val-536, His-538, and Val-541. Arg-583 serves as a coordination point for CoA. Lys-608 is subject to N6-acetyllysine.

It belongs to the ATP-dependent AMP-binding enzyme family. Requires Mg(2+) as cofactor. In terms of processing, acetylated. Deacetylation by the SIR2-homolog deacetylase activates the enzyme.

It catalyses the reaction acetate + ATP + CoA = acetyl-CoA + AMP + diphosphate. Its function is as follows. Catalyzes the conversion of acetate into acetyl-CoA (AcCoA), an essential intermediate at the junction of anabolic and catabolic pathways. AcsA undergoes a two-step reaction. In the first half reaction, AcsA combines acetate with ATP to form acetyl-adenylate (AcAMP) intermediate. In the second half reaction, it can then transfer the acetyl group from AcAMP to the sulfhydryl group of CoA, forming the product AcCoA. In Methylorubrum populi (strain ATCC BAA-705 / NCIMB 13946 / BJ001) (Methylobacterium populi), this protein is Acetyl-coenzyme A synthetase.